We begin with the raw amino-acid sequence, 368 residues long: Ribosomal RNA large subunit methyltransferase M (368 aa).

Residues serine 189, 222 to 225 (CPGG), aspartate 241, aspartate 261, and aspartate 278 contribute to the S-adenosyl-L-methionine site. Catalysis depends on lysine 307, which acts as the Proton acceptor.

The protein belongs to the class I-like SAM-binding methyltransferase superfamily. RNA methyltransferase RlmE family. RlmM subfamily. In terms of assembly, monomer.

The protein localises to the cytoplasm. It catalyses the reaction cytidine(2498) in 23S rRNA + S-adenosyl-L-methionine = 2'-O-methylcytidine(2498) in 23S rRNA + S-adenosyl-L-homocysteine + H(+). In terms of biological role, catalyzes the 2'-O-methylation at nucleotide C2498 in 23S rRNA. This chain is Ribosomal RNA large subunit methyltransferase M, found in Yersinia enterocolitica serotype O:8 / biotype 1B (strain NCTC 13174 / 8081).